Here is a 581-residue protein sequence, read N- to C-terminus: Prolactin receptor (581 aa).

A signal peptide spans 1–24 (MKENAASRVVFILLLFLSVSLLNG). Topologically, residues 25-237 (QSPPEKPKLV…NDFPVKDTSM (213 aa)) are extracellular. Fibronectin type-III domains lie at 27-127 (PPEK…IVEP) and 129-229 (PPAN…IPND). A disulfide bridge connects residues Cys-36 and Cys-46. Asn-59 is a glycosylation site (N-linked (GlcNAc...) asparagine). A disulfide bond links Cys-75 and Cys-86. N-linked (GlcNAc...) asparagine glycosylation occurs at Asn-132. Zn(2+)-binding residues include Asp-211 and His-212. The short motif at 215–219 (WSEWS) is the WSXWS motif element. Residues 238 to 258 (WIFVAILSAVICLIMVWAVAL) form a helical membrane-spanning segment. At 259-581 (KGYSMVTCIL…PAKKAPPALP (323 aa)) the chain is on the cytoplasmic side. The short motif at 267–275 (ILPPVPGPK) is the Box 1 motif element. Disordered regions lie at residues 324 to 384 (QLMP…EKLE) and 458 to 499 (DQHA…PRPQ). Composition is skewed to basic and acidic residues over residues 329 to 349 (PSKE…DSDS), 375 to 384 (HTPEGPEKLE), and 469 to 483 (ETGR…RESE).

It belongs to the type I cytokine receptor family. Type 1 subfamily. In terms of assembly, interacts with SMARCA1. Interacts with NEK3 and VAV2 and this interaction is prolactin-dependent. In terms of tissue distribution, expressed in all tissues examined; liver, peripheral blood lymphocytes, endometrium, corpus luteum, intestine, fetal thymus, fetal spleen, fetal liver and fetal brain.

It is found in the membrane. Its function is as follows. This is a receptor for the anterior pituitary hormone prolactin. The protein is Prolactin receptor (PRLR) of Bos taurus (Bovine).